A 188-amino-acid chain; its full sequence is Dual specificity protein phosphatase 18 (188 aa).

The Tyrosine-protein phosphatase domain occupies 19–160 (GLSQITKSLF…LIHYELQLFG (142 aa)). The tract at residues 95-141 (MQKGRTLLHCAAGVSRSAALCLAYLMKYHAMSLVDAHTWTKSCRPII) is sufficient for mitochondrial localization. Cys104 acts as the Phosphocysteine intermediate in catalysis.

It belongs to the protein-tyrosine phosphatase family. Non-receptor class dual specificity subfamily.

It is found in the cytoplasm. The protein localises to the nucleus. It localises to the mitochondrion inner membrane. It carries out the reaction O-phospho-L-tyrosyl-[protein] + H2O = L-tyrosyl-[protein] + phosphate. The catalysed reaction is O-phospho-L-seryl-[protein] + H2O = L-seryl-[protein] + phosphate. It catalyses the reaction O-phospho-L-threonyl-[protein] + H2O = L-threonyl-[protein] + phosphate. Functionally, can dephosphorylate single and diphosphorylated synthetic MAPK peptides, with preference for the phosphotyrosine and diphosphorylated forms over phosphothreonine. In vitro, dephosphorylates p-nitrophenyl phosphate (pNPP). This chain is Dual specificity protein phosphatase 18 (Dusp18), found in Mus musculus (Mouse).